The chain runs to 291 residues: Phytanoyl-CoA dioxygenase domain-containing protein 1 (291 aa).

Position 55 is a phosphothreonine (threonine 55). 2-oxoglutarate contacts are provided by residues lysine 102, methionine 141, 156–158, and tryptophan 174; that span reads HQD. Fe cation contacts are provided by histidine 156 and aspartate 158. Position 246 (histidine 246) interacts with Fe cation. Residues serine 248 and arginine 257 each contribute to the 2-oxoglutarate site.

This sequence belongs to the PhyH family. PHYHD1 subfamily. Requires Fe cation as cofactor.

2-oxoglutarate(2OG)-dependent dioxygenase that catalyzes the conversion of 2-oxoglutarate to succinate and CO(2) in an iron-dependent manner. However, does not couple 2OG turnover to the hydroxylation of acyl-coenzyme A derivatives, implying that it is not directly involved in phytanoyl coenzyme-A metabolism. Does not show detectable activity towards fatty acid CoA thioesters. The chain is Phytanoyl-CoA dioxygenase domain-containing protein 1 from Mus musculus (Mouse).